Here is a 414-residue protein sequence, read N- to C-terminus: MVVMGNGPLKGTVATSGAKNAALPILFSTLLAEGNHVFTNMPKLKDIESTSELLNSLGCETKWVGDEFHVTVNKPSSFEASYDLVRKMRASFLCMGPMLAKYGEAVVSQPGGCAIGSRPIDLHLDGFRALGATITQKEGYVHAGSPKLKGGTFLFETVTVGGTENVMMAATLADGVTVLENAAKEPEIVDLAEYLNKMGAKITGHGTSVIRIEGVAKLTPAKHSIMPDRIEAGTLLIAGAITKGQVTVTKCVPAHLEALILKMREAGFKIETTKDTMTVFPCDQWEAVDITTAPHPLFPTDLQAQFMALMTVAHGTSVITETVFENRFMHVTELSRLGADITPKTRVAVVRGCPGKLTGAPVMATDLRASASLVLAGLVASGETVVSRIYHLDRGYEKLEDKLSSLGAKIRRIE.

19-20 (KN) contributes to the phosphoenolpyruvate binding site. Arg89 lines the UDP-N-acetyl-alpha-D-glucosamine pocket. Cys113 serves as the catalytic Proton donor. Cys113 carries the post-translational modification 2-(S-cysteinyl)pyruvic acid O-phosphothioketal. Residues 118–122 (RPIDL), Asp301, and Val323 each bind UDP-N-acetyl-alpha-D-glucosamine.

Belongs to the EPSP synthase family. MurA subfamily.

It localises to the cytoplasm. The catalysed reaction is phosphoenolpyruvate + UDP-N-acetyl-alpha-D-glucosamine = UDP-N-acetyl-3-O-(1-carboxyvinyl)-alpha-D-glucosamine + phosphate. Its pathway is cell wall biogenesis; peptidoglycan biosynthesis. Cell wall formation. Adds enolpyruvyl to UDP-N-acetylglucosamine. This Bdellovibrio bacteriovorus (strain ATCC 15356 / DSM 50701 / NCIMB 9529 / HD100) protein is UDP-N-acetylglucosamine 1-carboxyvinyltransferase.